A 155-amino-acid chain; its full sequence is Protein-export protein SecB 1 (155 aa).

The protein belongs to the SecB family. Homotetramer, a dimer of dimers. One homotetramer interacts with 1 SecA dimer.

Its subcellular location is the cytoplasm. In terms of biological role, one of the proteins required for the normal export of preproteins out of the cell cytoplasm. It is a molecular chaperone that binds to a subset of precursor proteins, maintaining them in a translocation-competent state. It also specifically binds to its receptor SecA. The polypeptide is Protein-export protein SecB 1 (Polaromonas naphthalenivorans (strain CJ2)).